Here is a 684-residue protein sequence, read N- to C-terminus: Rabphilin-3A (684 aa).

The disordered stretch occupies residues 1–21 (MTDTVVNRWMYPGDGPLQSND). One can recognise a RabBD domain in the interval 40-157 (QRKQEELTDE…KRSGAWFFKG (118 aa)). Residues 88–145 (GDGVNRCILCGEQLGMLGSACVVCEDCKKNVCTKCGVETSNNRPHPVWLCKICLEQRE) form an FYVE-type zinc finger. Cysteine 94, cysteine 97, cysteine 111, cysteine 114, cysteine 119, cysteine 122, cysteine 137, and cysteine 140 together coordinate Zn(2+). Residues 162–377 (VLPQPMPIKK…EEEEANSYDS (216 aa)) form a disordered region. Positions 199–208 (ARGDMEDRRA) are enriched in basic and acidic residues. Arginine 223 bears the Omega-N-methylarginine mark. Residues 243 to 252 (RDSEGWDHGH) show a composition bias toward basic and acidic residues. Serine 274 carries the post-translational modification Phosphoserine. Positions 283 to 299 (ASMPSPAPPQPVQPGPP) are enriched in pro residues. Low complexity predominate over residues 301–310 (GSRAAPGPGR). Positions 382–504 (TLGALEFSLL…KANQRKNFNI (123 aa)) constitute a C2 1 domain. Residues methionine 412, aspartate 413, aspartate 419, aspartate 474, glutamate 475, aspartate 476, glutamate 482, glutamate 529, aspartate 571, aspartate 577, aspartate 631, tyrosine 632, aspartate 633, and aspartate 639 each contribute to the Ca(2+) site. The C2 2 domain maps to 540–673 (ERGKILVSLM…NKDKKIERWH (134 aa)). A phosphoserine mark is found at serine 682 and serine 683.

As to quaternary structure, interacts with RAB3B, RAB3C, RAB3D, RAB8A, RAB27A and RAB27B. Interacts with RAB3A; this interaction recruits RPH3A to synaptic vesicules. Interacts (via C2B domain) with SNAP25. Interacts with deubiquitinating enzyme CAND1; this interaction results in the deubiquitination of RPH3A. Interacts with GRIN2A and DLG4; this ternary complex regulates NMDA receptor composition at postsynaptic membranes. Interacts with SNCA. Requires Ca(2+) as cofactor. Ubiquitinated. Deubiquitinated by CAND1 to prevent its degradation. As to expression, specifically expressed in brain.

The protein localises to the cytoplasmic vesicle. The protein resides in the secretory vesicle. It localises to the synaptic vesicle membrane. It is found in the cell projection. Its subcellular location is the dendritic spine. The protein localises to the postsynaptic cell membrane. The protein resides in the membrane. Its function is as follows. Plays an essential role in docking and fusion steps of regulated exocytosis. At the presynaptic level, RPH3A is recruited by RAB3A to the synaptic vesicle membrane in a GTP-dependent manner where it modulates synaptic vesicle trafficking and calcium-triggered neurotransmitter release. In the post-synaptic compartment, forms a ternary complex with GRIN2A and DLG4 and regulates NMDA receptor stability. Also plays a role in the exocytosis of arginine vasopressin hormone. The polypeptide is Rabphilin-3A (Rph3a) (Rattus norvegicus (Rat)).